The chain runs to 338 residues: Penicillin V acylase (338 aa).

Positions 1-3 are cleaved as a propeptide — removed in mature form; that stretch reads MLG. Cys-4 serves as the catalytic Nucleophile.

This sequence belongs to the peptidase C59 family. Homotetramer. In terms of processing, expressed as an inactive precursor that is cleaved autocatalytically at Gly-3/Cys-4 to generate an active enzyme. Processing exposes a catalytic N-terminal nucleophile residue with a free alpha amino group.

The catalysed reaction is a penicillin + H2O = 6-aminopenicillanate + a carboxylate. Its activity is regulated as follows. Hydrolase activity is rapidly inhibited by lysine modifying reagents. Its function is as follows. Catalyzes the hydrolysis of penicillin V to 6-aminopenicillanate (6-APA). Exhibits high specificity for penicillin V. Penicillin G and other related compounds are hydrolyzed at less than 10% of the rate of penicillin V. Among the cephalosporins, cephalosporin C is resistant to cleavage, whereas cephalosporin G is cleaved at about 1% of the rate of cleavage of penicillin V. This chain is Penicillin V acylase, found in Lysinibacillus sphaericus (Bacillus sphaericus).